Consider the following 402-residue polypeptide: UDP-N-acetylmuramoylalanine--D-glutamate ligase (402 aa).

An ATP-binding site is contributed by 97–103 (GTNGKTT).

Belongs to the MurCDEF family.

It is found in the cytoplasm. It carries out the reaction UDP-N-acetyl-alpha-D-muramoyl-L-alanine + D-glutamate + ATP = UDP-N-acetyl-alpha-D-muramoyl-L-alanyl-D-glutamate + ADP + phosphate + H(+). Its pathway is cell wall biogenesis; peptidoglycan biosynthesis. In terms of biological role, cell wall formation. Catalyzes the addition of glutamate to the nucleotide precursor UDP-N-acetylmuramoyl-L-alanine (UMA). The chain is UDP-N-acetylmuramoylalanine--D-glutamate ligase from Campylobacter jejuni subsp. jejuni serotype O:6 (strain 81116 / NCTC 11828).